Consider the following 341-residue polypeptide: NADH-ubiquinone oxidoreductase chain 2 (341 aa).

10 helical membrane passes run 8 to 28 (ILFTTIMIIGTLITVTSNSWL), 61 to 81 (FLTQALASTVLLFSSILLMLA), 95 to 115 (MIIMSALLLKSGAAPFHFWFP), 121 to 141 (LTWMNALMLMTWQKIAPLMLI), 146 to 166 (IKNLLLISVILSVIIGAIGGL), 174 to 194 (LMAFSSINHLGWMLSSLMISE), 195 to 215 (SIWLIYFIFYSFLSFVLTFMF), 238 to 258 (FSLFMNFLSLGGLPPFLGFLP), 273 to 293 (FLLTLMMMSTLITLFFYLRIC), and 321 to 341 (LIMTFFSIFGLFLISLFFFML).

It belongs to the complex I subunit 2 family.

The protein localises to the mitochondrion inner membrane. It carries out the reaction a ubiquinone + NADH + 5 H(+)(in) = a ubiquinol + NAD(+) + 4 H(+)(out). In terms of biological role, core subunit of the mitochondrial membrane respiratory chain NADH dehydrogenase (Complex I) that is believed to belong to the minimal assembly required for catalysis. Complex I functions in the transfer of electrons from NADH to the respiratory chain. The immediate electron acceptor for the enzyme is believed to be ubiquinone. This chain is NADH-ubiquinone oxidoreductase chain 2 (mt:ND2), found in Drosophila yakuba (Fruit fly).